Reading from the N-terminus, the 558-residue chain is Putative transport protein VC0395_A0715/VC395_1212 (558 aa).

5 helical membrane passes run 5–25 (VVLL…AIGL), 37–57 (LGNS…GFSF), 66–86 (FMLF…GIFF), 92–112 (YLIL…FGGY), and 164–184 (VGYA…AKLL). 2 consecutive RCK C-terminal domains span residues 203 to 290 (RGLG…FRNG) and 291 to 374 (KEVF…KIGF). The next 6 membrane-spanning stretches (helical) occupy residues 384–404 (LLAF…TMTF), 407–427 (VSFS…LGFL), 441–461 (ALNM…GLNA), 476–496 (VIGL…LVGA), 504–524 (ALLF…DVVN), and 537–557 (AGTY…FILL).

It belongs to the AAE transporter (TC 2.A.81) family. YbjL subfamily.

It is found in the cell membrane. This Vibrio cholerae serotype O1 (strain ATCC 39541 / Classical Ogawa 395 / O395) protein is Putative transport protein VC0395_A0715/VC395_1212.